The chain runs to 457 residues: Protein translocase subunit SecY (457 aa).

The next 10 helical transmembrane spans lie at 17 to 37 (IFFT…PVPG), 75 to 95 (IALG…LVVF), 118 to 138 (TRLF…KFAL), 162 to 182 (WVFY…LMWV), 195 to 215 (ISLI…GSIF), 230 to 250 (IVSL…TVLI), 287 to 307 (VIPV…GQFL), 326 to 346 (VAYS…WTAT), 386 to 406 (LLGA…GRIL), and 412 to 432 (VSYF…LDTM).

This sequence belongs to the SecY/SEC61-alpha family. As to quaternary structure, component of the Sec protein translocase complex. Heterotrimer consisting of SecY, SecE and SecG subunits. The heterotrimers can form oligomers, although 1 heterotrimer is thought to be able to translocate proteins. Interacts with the ribosome. Interacts with SecDF, and other proteins may be involved. Interacts with SecA.

It localises to the cell inner membrane. The central subunit of the protein translocation channel SecYEG. Consists of two halves formed by TMs 1-5 and 6-10. These two domains form a lateral gate at the front which open onto the bilayer between TMs 2 and 7, and are clamped together by SecE at the back. The channel is closed by both a pore ring composed of hydrophobic SecY resides and a short helix (helix 2A) on the extracellular side of the membrane which forms a plug. The plug probably moves laterally to allow the channel to open. The ring and the pore may move independently. The sequence is that of Protein translocase subunit SecY from Chlamydia trachomatis serovar D (strain ATCC VR-885 / DSM 19411 / UW-3/Cx).